The following is a 157-amino-acid chain: Peroxiredoxin Bcp (157 aa).

In terms of domain architecture, Thioredoxin spans 3–156 (IEIGQKAPDL…ALQTLKDMSE (154 aa)). Residue C45 is the Cysteine sulfenic acid (-SOH) intermediate of the active site. A disulfide bond links C45 and C50.

It belongs to the peroxiredoxin family. BCP/PrxQ subfamily. Monomer.

It catalyses the reaction a hydroperoxide + [thioredoxin]-dithiol = an alcohol + [thioredoxin]-disulfide + H2O. In terms of biological role, thiol-specific peroxidase that catalyzes the reduction of hydrogen peroxide and organic hydroperoxides to water and alcohols, respectively. Plays a role in cell protection against oxidative stress by detoxifying peroxides and as sensor of hydrogen peroxide-mediated signaling events. This is Peroxiredoxin Bcp (ygaF) from Bacillus subtilis (strain 168).